Reading from the N-terminus, the 432-residue chain is Neuropeptide FF receptor 1 (432 aa).

At 1–43 (MEAEPSQPPNGSWPLGQNGSDVETSMATSLTFSSYYQHSSPVA) the chain is on the extracellular side. Asn-10 and Asn-18 each carry an N-linked (GlcNAc...) asparagine glycan. Residues 44–64 (AMFIAAYVLIFLLCMVGNTLV) traverse the membrane as a helical segment. Residues 65–80 (CFIVLKNRHMRTVTNM) are Cytoplasmic-facing. Residues 81 to 101 (FILNLAVSDLLVGIFCMPTTL) traverse the membrane as a helical segment. Over 102 to 117 (VDNLITGWPFDNATCK) the chain is Extracellular. Residue Asn-113 is glycosylated (N-linked (GlcNAc...) asparagine). Residues Cys-116 and Cys-203 are joined by a disulfide bond. A helical transmembrane segment spans residues 118-138 (MSGLVQGMSVSASVFTLVAIA). Over 139–158 (VERFRCIVHPFREKLTLRKA) the chain is Cytoplasmic. Residues 159–179 (LFTIAVIWALALLIMCPSAVT) form a helical membrane-spanning segment. Over 180 to 214 (LTVTREEHHFMLDARNRSYPLYSCWEAWPEKGMRK) the chain is Extracellular. A glycan (N-linked (GlcNAc...) asparagine) is linked at Asn-195. A helical membrane pass occupies residues 215-235 (VYTAVLFAHIYLVPLALIVVM). At 236–273 (YVRIARKLCQAPGPARDTEEAVAEGGRTSRRRARVVHM) the chain is on the cytoplasmic side. Residues 274-294 (LVMVALFFTLSWLPLWVLLLL) traverse the membrane as a helical segment. Residues 295-309 (IDYGELSELQLHLLS) are Extracellular-facing. A helical membrane pass occupies residues 310–330 (VYAFPLAHWLAFFHSSANPII). At 331-432 (YGYFNENFRR…MPLTIPAWNI (102 aa)) the chain is on the cytoplasmic side. The span at 380–406 (PSDSGLPSESGPSSGVPGPGRLPLRNG) shows a compositional bias: low complexity. Positions 380–422 (PSDSGLPSESGPSSGVPGPGRLPLRNGRVAHQDGPGEGPGCNH) are disordered.

This sequence belongs to the G-protein coupled receptor 1 family. As to expression, expressed at high levels in the hypothalamus. Moderate levels found in the midbrain, thalamus, medulla oblongata, testis, eye, whole brain, cerebral cortex, striatum, hippocampus, cerebellum, optic nerve, placenta, spinal cord, pituitary gland and ovary.

The protein localises to the cell membrane. Receptor for NPAF (A-18-F-amide) and NPFF (F-8-F-amide) neuropeptides, also known as morphine-modulating peptides. Can also be activated by a variety of naturally occurring or synthetic FMRF-amide like ligands. This receptor mediates its action by association with G proteins that activate a phosphatidylinositol-calcium second messenger system. This chain is Neuropeptide FF receptor 1 (Npffr1), found in Rattus norvegicus (Rat).